Consider the following 508-residue polypeptide: Photosystem II CP47 reaction center protein (508 aa).

The next 6 membrane-spanning stretches (helical) occupy residues 21–36, 101–115, 140–156, 203–218, 237–252, and 457–472; these read SVHI…WAGS, IVFS…IWHW, GIHL…SGAF, IAAG…FHLS, VLSS…AFIV, and TFAL…HGAR.

The protein belongs to the PsbB/PsbC family. PsbB subfamily. In terms of assembly, PSII is composed of 1 copy each of membrane proteins PsbA, PsbB, PsbC, PsbD, PsbE, PsbF, PsbH, PsbI, PsbJ, PsbK, PsbL, PsbM, PsbT, PsbX, PsbY, PsbZ, Psb30/Ycf12, at least 3 peripheral proteins of the oxygen-evolving complex and a large number of cofactors. It forms dimeric complexes. It depends on Binds multiple chlorophylls. PSII binds additional chlorophylls, carotenoids and specific lipids. as a cofactor.

The protein resides in the plastid. The protein localises to the chloroplast thylakoid membrane. Its function is as follows. One of the components of the core complex of photosystem II (PSII). It binds chlorophyll and helps catalyze the primary light-induced photochemical processes of PSII. PSII is a light-driven water:plastoquinone oxidoreductase, using light energy to abstract electrons from H(2)O, generating O(2) and a proton gradient subsequently used for ATP formation. This Cycas taitungensis (Prince sago) protein is Photosystem II CP47 reaction center protein.